The sequence spans 728 residues: 1,4-alpha-glucan branching enzyme GlgB (728 aa).

Residue aspartate 409 is the Nucleophile of the active site. Residue glutamate 462 is the Proton donor of the active site.

Belongs to the glycosyl hydrolase 13 family. GlgB subfamily. As to quaternary structure, monomer.

It catalyses the reaction Transfers a segment of a (1-&gt;4)-alpha-D-glucan chain to a primary hydroxy group in a similar glucan chain.. Its pathway is glycan biosynthesis; glycogen biosynthesis. In terms of biological role, catalyzes the formation of the alpha-1,6-glucosidic linkages in glycogen by scission of a 1,4-alpha-linked oligosaccharide from growing alpha-1,4-glucan chains and the subsequent attachment of the oligosaccharide to the alpha-1,6 position. This Cereibacter sphaeroides (strain ATCC 17023 / DSM 158 / JCM 6121 / CCUG 31486 / LMG 2827 / NBRC 12203 / NCIMB 8253 / ATH 2.4.1.) (Rhodobacter sphaeroides) protein is 1,4-alpha-glucan branching enzyme GlgB.